A 1026-amino-acid chain; its full sequence is Beta-galactosidase (1026 aa).

Positions 104 and 203 each coordinate substrate. Asp203 is a binding site for Na(+). Mg(2+) contacts are provided by Glu418, His420, and Glu463. Substrate contacts are provided by residues Glu463 and 539 to 542; that span reads EYAH. The Proton donor role is filled by Glu463. Residue Glu539 is the Nucleophile of the active site. A Mg(2+)-binding site is contributed by Asn599. 2 residues coordinate Na(+): Phe603 and Asn606. Substrate is bound by residues Asn606 and Trp1002.

It belongs to the glycosyl hydrolase 2 family. In terms of assembly, homotetramer. Requires Mg(2+) as cofactor. Na(+) is required as a cofactor.

It catalyses the reaction Hydrolysis of terminal non-reducing beta-D-galactose residues in beta-D-galactosides.. The protein is Beta-galactosidase of Erwinia tasmaniensis (strain DSM 17950 / CFBP 7177 / CIP 109463 / NCPPB 4357 / Et1/99).